Reading from the N-terminus, the 382-residue chain is ATP phosphoribosyltransferase regulatory subunit (382 aa).

Belongs to the class-II aminoacyl-tRNA synthetase family. HisZ subfamily. In terms of assembly, heteromultimer composed of HisG and HisZ subunits.

The protein resides in the cytoplasm. It participates in amino-acid biosynthesis; L-histidine biosynthesis; L-histidine from 5-phospho-alpha-D-ribose 1-diphosphate: step 1/9. Functionally, required for the first step of histidine biosynthesis. May allow the feedback regulation of ATP phosphoribosyltransferase activity by histidine. This is ATP phosphoribosyltransferase regulatory subunit from Acidovorax sp. (strain JS42).